The primary structure comprises 102 residues: MYLMRKIVFVSCVILGLAACSSQPEQIGGGVYDMKTVQEYNARVISGNTVTQTQKDKITQQIDTSLKLNQSDNKVKTRTRRVLPVLPVTPSVGYHYNYHYFR.

Residues 7-23 (IVFVSCVILGLAACSSQ) traverse the membrane as a helical segment.

It is found in the membrane. This is an uncharacterized protein from Haemophilus influenzae (strain ATCC 51907 / DSM 11121 / KW20 / Rd).